We begin with the raw amino-acid sequence, 462 residues long: Metal cation symporter ZIP8 (462 aa).

An N-terminal signal peptide occupies residues Met-1–Gly-19. Residues Arg-20–Gly-132 are Extracellular-facing. N-linked (GlcNAc...) asparagine glycans are attached at residues Asn-40, Asn-88, and Asn-96. A helical membrane pass occupies residues Phe-133–Ile-153. Residues Lys-154–Lys-160 are Cytoplasmic-facing. Residues Ile-161–Leu-181 traverse the membrane as a helical segment. Topologically, residues Ile-182–Lys-191 are extracellular. A helical transmembrane segment spans residues Ile-192–Val-212. The Cytoplasmic segment spans residues Glu-213–Ala-367. Positions Glu-345–Glu-350 match the XEXPHE-motif motif. Residues Leu-368–Val-388 form a helical membrane-spanning segment. The Extracellular portion of the chain corresponds to Gly-389–Asn-390. A helical membrane pass occupies residues Asn-391–Ala-411. At Asp-412 to Asp-431 the chain is on the cytoplasmic side. The chain crosses the membrane as a helical span at residues Phe-432–Ile-452. At Thr-453–Gln-462 the chain is on the extracellular side.

This sequence belongs to the ZIP transporter (TC 2.A.5) family. Homodimer. Post-translationally, N-glycosylated. N-glycosylation is not required for proper iron and zinc transport.

The protein localises to the cell membrane. It is found in the lysosome membrane. It localises to the apical cell membrane. Its subcellular location is the basolateral cell membrane. The enzyme catalyses Zn(2+)(out) + 2 hydrogencarbonate(out) = Zn(2+)(in) + 2 hydrogencarbonate(in). The catalysed reaction is selenite(out) + Zn(2+)(out) + hydrogencarbonate(out) = selenite(in) + Zn(2+)(in) + hydrogencarbonate(in). It catalyses the reaction Mn(2+)(out) + 2 hydrogencarbonate(out) = Mn(2+)(in) + 2 hydrogencarbonate(in). It carries out the reaction Fe(2+)(out) + 2 hydrogencarbonate(out) = Fe(2+)(in) + 2 hydrogencarbonate(in). The enzyme catalyses Cd(2+)(out) + 2 hydrogencarbonate(out) = Cd(2+)(in) + 2 hydrogencarbonate(in). The catalysed reaction is Co(2+)(out) + 2 hydrogencarbonate(out) = Co(2+)(in) + 2 hydrogencarbonate(in). Electroneutral divalent metal cation:bicarbonate symporter of the plasma membrane mediating the cellular uptake of zinc and manganese, two divalent metal cations important for development, tissue homeostasis and immunity. Transports an electroneutral complex composed of a divalent metal cation and two bicarbonate anions or alternatively a bicarbonate and a selenite anion. Thereby, it also contributes to the cellular uptake of selenium, an essential trace metal and micronutrient. Also imports cadmium a non-essential metal which is cytotoxic and carcinogenic. May also transport iron and cobalt through membranes. Through zinc import, indirectly regulates the metal-dependent transcription factor MTF1 and the expression of some metalloproteases involved in cartilage catabolism and also probably heart development. Also indirectly regulates the expression of proteins involved in cell morphology and cytoskeleton organization. Indirectly controls innate immune function and inflammatory response by regulating zinc cellular uptake which in turn modulates the expression of genes specific of these processes. Protects, for instance, cells from injury and death at the onset of inflammation. By regulating zinc influx into monocytes also directly modulates their adhesion to endothelial cells and arteries. Reclaims manganese from the bile at the apical membrane of hepatocytes, thereby regulating the activity of the manganese-dependent enzymes through the systemic levels of the nutrient. Also participates in manganese reabsorption in the proximal tubule of the kidney. By mediating the extracellular uptake of manganese by cells of the blood-brain barrier, may also play a role in the transport of the micronutrient to the brain. With manganese cellular uptake also participates in mitochondrial proper function. Finally, also probably functions intracellularly, translocating zinc from lysosome to cytosol to indirectly enhance the expression of specific genes during TCR-mediated T cell activation. The chain is Metal cation symporter ZIP8 from Rattus norvegicus (Rat).